A 318-amino-acid polypeptide reads, in one-letter code: Porphobilinogen deaminase (318 aa).

Cys241 carries the post-translational modification S-(dipyrrolylmethanemethyl)cysteine.

It belongs to the HMBS family. As to quaternary structure, monomer. The cofactor is dipyrromethane.

The catalysed reaction is 4 porphobilinogen + H2O = hydroxymethylbilane + 4 NH4(+). The protein operates within porphyrin-containing compound metabolism; protoporphyrin-IX biosynthesis; coproporphyrinogen-III from 5-aminolevulinate: step 2/4. In terms of biological role, tetrapolymerization of the monopyrrole PBG into the hydroxymethylbilane pre-uroporphyrinogen in several discrete steps. This Geobacter metallireducens (strain ATCC 53774 / DSM 7210 / GS-15) protein is Porphobilinogen deaminase.